The following is a 546-amino-acid chain: MYCIQCEQTLHTATGTGCRFARGDCGKTAAISDQQDALVAALLAVSSHADAARKVGLIDAEVDAFVPQALFATLTNVNFDPERLAGYIRKAQELRNRLQLALAGKPLALPALADADWPFAAAQQAEAGKIVALNRDAARIGEDVLGLRLLCLYGLKGIAAYMEHARVLGQTDTQVAAGFHAHMAYLASEPTDAKGLFAEALAIGTLNFRVMEMLDAGATGTFGDPQPTPVNRRPVAGKAILVSGHDLHDLLRILEQTAGRGINVYTHGEMLPAHGYPAFHAHPHLIGNYGSAWQNQQAEFAAFPGAIVMTSNCLIDPRTGAYQDRIFTRSIVGWPGVRHIEGEDFAEVIACAEALPGFAATEAPVTQLTGFGRNALMTAAPAVIERVKVGKIRHFYLIGGCDGARAERAYYADLARMLPQDTVVLTLGCGKFRLDGIDFGAVDGLPRLLDVGQCNDAYAAIRLALALAEAFDCGVNDLPLTLVLSWFEQKAIVILLTLLALGVKDIRVGPTAPGFLTPNLIATLNAQFGLRLISTPEETMAETLSA.

Cys-3, Cys-6, Cys-18, and Cys-25 together coordinate [4Fe-4S] cluster. Hybrid [4Fe-2O-2S] cluster contacts are provided by His-245, Glu-269, Cys-313, Cys-401, Cys-429, Cys-454, Glu-488, and Lys-490. A Cysteine persulfide modification is found at Cys-401.

It belongs to the HCP family. The cofactor is [4Fe-4S] cluster. Hybrid [4Fe-2O-2S] cluster serves as cofactor.

It is found in the cytoplasm. The catalysed reaction is A + NH4(+) + H2O = hydroxylamine + AH2 + H(+). Its activity is regulated as follows. Inhibited by cyanide and by sulfide and iron reagents such as dithioerythritol, 2,2'-dipyridyl and o-phenanthroline. Could be involved in assimilation and/or detoxification of hydroxylamine, which is a toxic compound that may be formed during nitrate/nitrite assimilation. Catalyzes the reduction of hydroxylamine to form NH(3) and H(2)O. It has a low reductase activity with FAD, FMN, benzyl viologen and bromphenol blue as electrons donors, but it is not able to use NAD or NADP. This chain is Hydroxylamine reductase, found in Rhodobacter capsulatus (Rhodopseudomonas capsulata).